Consider the following 230-residue polypeptide: MRVLNDTISKVINYKFTDYAILEEALTHPSVNKRNSEDQVVSYERLEFLGDSVLNMVVSVMLFKMFPEEKEGALAKRKTDLVCGSTIANVAKEIELGNFIIMNNSERCNGGKCNLKNLENSLEALIGAIYIDGGLESVEKFIIRHWEKLAKDILDPPQDPKTSLQEWTQRNKLPLPKYELVKQTGPAHNPEFTISVCIESYDKVSACAPSKKIAEQKAAELILEKIKKTT.

Positions 5 to 134 (NDTISKVINY…LIGAIYIDGG (130 aa)) constitute an RNase III domain. Glu-47 contributes to the Mg(2+) binding site. Asp-51 is a catalytic residue. 2 residues coordinate Mg(2+): Asn-120 and Glu-123. Residue Glu-123 is part of the active site. The 70-residue stretch at 159–228 (DPKTSLQEWT…AELILEKIKK (70 aa)) folds into the DRBM domain.

It belongs to the ribonuclease III family. Homodimer. It depends on Mg(2+) as a cofactor.

Its subcellular location is the cytoplasm. It catalyses the reaction Endonucleolytic cleavage to 5'-phosphomonoester.. In terms of biological role, digests double-stranded RNA. Involved in the processing of primary rRNA transcript to yield the immediate precursors to the large and small rRNAs (23S and 16S). Processes some mRNAs, and tRNAs when they are encoded in the rRNA operon. Processes pre-crRNA and tracrRNA of type II CRISPR loci if present in the organism. The sequence is that of Ribonuclease 3 from Wolbachia pipientis subsp. Culex pipiens (strain wPip).